The sequence spans 191 residues: Fe/S biogenesis protein NfuA (191 aa).

Cys-149 and Cys-152 together coordinate [4Fe-4S] cluster.

It belongs to the NfuA family. Homodimer. [4Fe-4S] cluster is required as a cofactor.

Involved in iron-sulfur cluster biogenesis. Binds a 4Fe-4S cluster, can transfer this cluster to apoproteins, and thereby intervenes in the maturation of Fe/S proteins. Could also act as a scaffold/chaperone for damaged Fe/S proteins. This is Fe/S biogenesis protein NfuA from Citrobacter koseri (strain ATCC BAA-895 / CDC 4225-83 / SGSC4696).